A 437-amino-acid polypeptide reads, in one-letter code: Integrase (437 aa).

A Core-binding (CB) domain is found at 73–158; the sequence is WTVERWLTHW…TARTAFGEAY (86 aa). The Tyr recombinase domain maps to 179-428; it reads EEVEPLEVED…DSVRNDVADR (250 aa). Catalysis depends on residues Arg-214, Lys-245, His-379, Arg-382, and Trp-405. Tyr-414 functions as the O-(3'-phospho-DNA)-tyrosine intermediate in the catalytic mechanism.

It belongs to the 'phage' integrase family.

In terms of biological role, is a recombinase (or integrase), catalyzing the cutting and rejoining of the recombining DNA molecules. The chain is Integrase (int) from Saccharopolyspora erythraea (Streptomyces erythraeus).